The primary structure comprises 259 residues: Deoxyribose-phosphate aldolase (259 aa).

Asp102 serves as the catalytic Proton donor/acceptor. Lys167 acts as the Schiff-base intermediate with acetaldehyde in catalysis. The active-site Proton donor/acceptor is the Lys201.

Belongs to the DeoC/FbaB aldolase family. DeoC type 2 subfamily.

The protein resides in the cytoplasm. It catalyses the reaction 2-deoxy-D-ribose 5-phosphate = D-glyceraldehyde 3-phosphate + acetaldehyde. The protein operates within carbohydrate degradation; 2-deoxy-D-ribose 1-phosphate degradation; D-glyceraldehyde 3-phosphate and acetaldehyde from 2-deoxy-alpha-D-ribose 1-phosphate: step 2/2. In terms of biological role, catalyzes a reversible aldol reaction between acetaldehyde and D-glyceraldehyde 3-phosphate to generate 2-deoxy-D-ribose 5-phosphate. This is Deoxyribose-phosphate aldolase from Escherichia coli O1:K1 / APEC.